Here is a 93-residue protein sequence, read N- to C-terminus: MGRSLKKGPFVAGHLMEKIEKLNAQGSKQVIKTWSRASTIIPDMVGHTIAVHNGKQHVPVYVSEQMVGHKLGEFAPTRTFRGHAKSDKKAGRK.

It belongs to the universal ribosomal protein uS19 family.

Protein S19 forms a complex with S13 that binds strongly to the 16S ribosomal RNA. The polypeptide is Small ribosomal subunit protein uS19 (Microcystis aeruginosa (strain NIES-843 / IAM M-2473)).